Consider the following 355-residue polypeptide: Isopentenyl-diphosphate delta-isomerase (355 aa).

9 to 10 (RK) serves as a coordination point for substrate. Residues 67–69 (AIT), S97, and N125 each bind FMN. 97 to 99 (SQR) is a binding site for substrate. Q161 contacts substrate. E162 is a binding site for Mg(2+). FMN is bound by residues K197, T227, 276–278 (GIR), and 297–298 (AL).

This sequence belongs to the IPP isomerase type 2 family. As to quaternary structure, homooctamer. Dimer of tetramers. Requires FMN as cofactor. The cofactor is NADPH. Mg(2+) is required as a cofactor.

It localises to the cytoplasm. The enzyme catalyses isopentenyl diphosphate = dimethylallyl diphosphate. Functionally, involved in the biosynthesis of isoprenoids. Catalyzes the 1,3-allylic rearrangement of the homoallylic substrate isopentenyl (IPP) to its allylic isomer, dimethylallyl diphosphate (DMAPP). This is Isopentenyl-diphosphate delta-isomerase from Methanococcus maripaludis (strain DSM 14266 / JCM 13030 / NBRC 101832 / S2 / LL).